The primary structure comprises 141 residues: Hemoglobin subunit alpha (141 aa).

The 141-residue stretch at valine 1–arginine 141 folds into the Globin domain. Histidine 58 serves as a coordination point for O2. Histidine 87 is a binding site for heme b.

This sequence belongs to the globin family. In terms of assembly, heterotetramer of two alpha chains and two beta chains. As to expression, red blood cells.

In terms of biological role, involved in oxygen transport from the lung to the various peripheral tissues. The polypeptide is Hemoglobin subunit alpha (HBA) (Psittacula krameri (Rose-ringed parakeet)).